The sequence spans 136 residues: Large ribosomal subunit protein eL27 (136 aa).

Residues 5 to 40 (MKPGKVVLVLAGRYSGRKAVIVKNIDDGTSDRPYSH) enclose the KOW domain. 2 positions are modified to N6-acetyllysine: Lys27 and Lys93.

Belongs to the eukaryotic ribosomal protein eL27 family. As to quaternary structure, component of the large ribosomal subunit. Interacts with RRP1B. Component of the large ribosomal subunit. Interacts with RRP1B. Interacts with DHX33.

The protein localises to the cytoplasm. It is found in the cytosol. Its subcellular location is the rough endoplasmic reticulum. In terms of biological role, component of the large ribosomal subunit. Required for proper rRNA processing and maturation of 28S and 5.8S rRNAs. This Canis lupus familiaris (Dog) protein is Large ribosomal subunit protein eL27 (RPL27).